Here is a 123-residue protein sequence, read N- to C-terminus: Small ribosomal subunit protein uS12 (123 aa).

Asp-89 carries the post-translational modification 3-methylthioaspartic acid. The interval 104 to 123 (TQGVKDRRQRRSKYGAKRPK) is disordered. The segment covering 110–123 (RRQRRSKYGAKRPK) has biased composition (basic residues).

It belongs to the universal ribosomal protein uS12 family. In terms of assembly, part of the 30S ribosomal subunit. Contacts proteins S8 and S17. May interact with IF1 in the 30S initiation complex.

In terms of biological role, with S4 and S5 plays an important role in translational accuracy. Functionally, interacts with and stabilizes bases of the 16S rRNA that are involved in tRNA selection in the A site and with the mRNA backbone. Located at the interface of the 30S and 50S subunits, it traverses the body of the 30S subunit contacting proteins on the other side and probably holding the rRNA structure together. The combined cluster of proteins S8, S12 and S17 appears to hold together the shoulder and platform of the 30S subunit. This chain is Small ribosomal subunit protein uS12, found in Rhodospirillum rubrum (strain ATCC 11170 / ATH 1.1.1 / DSM 467 / LMG 4362 / NCIMB 8255 / S1).